A 469-amino-acid polypeptide reads, in one-letter code: Mitochondrial-processing peptidase subunit beta (469 aa).

A Zn(2+)-binding site is contributed by His-78. Glu-81 acts as the Proton acceptor in catalysis. Residues His-82 and Glu-159 each contribute to the Zn(2+) site.

It belongs to the peptidase M16 family. As to quaternary structure, heterodimer of alpha and beta subunits, forming the mitochondrial processing protease (MPP) in which subunit alpha is involved in substrate recognition and binding and subunit beta is the catalytic subunit. mppB is probably also part of the cytochrome bc1 complex as a core I protein in the mitochondrial inner membrane. Requires Zn(2+) as cofactor.

Its subcellular location is the mitochondrion inner membrane. It is found in the mitochondrion matrix. The catalysed reaction is Release of N-terminal transit peptides from precursor proteins imported into the mitochondrion, typically with Arg in position P2.. Its activity is regulated as follows. Binding to alpha subunit is required for catalytic activity. Its function is as follows. Catalytic subunit of the essential mitochondrial processing protease (MPP), which cleaves the mitochondrial sequence off newly imported precursors proteins. Preferentially, cleaves after an arginine at position P2. Plays an essential role in mitochondrial biogenesis. The chain is Mitochondrial-processing peptidase subunit beta (mppB) from Dictyostelium discoideum (Social amoeba).